The sequence spans 391 residues: Histidinol-phosphate aminotransferase (391 aa).

Position 246 is an N6-(pyridoxal phosphate)lysine (K246).

The protein belongs to the class-II pyridoxal-phosphate-dependent aminotransferase family. Histidinol-phosphate aminotransferase subfamily. The cofactor is pyridoxal 5'-phosphate.

It catalyses the reaction L-histidinol phosphate + 2-oxoglutarate = 3-(imidazol-4-yl)-2-oxopropyl phosphate + L-glutamate. It functions in the pathway amino-acid biosynthesis; L-histidine biosynthesis; L-histidine from 5-phospho-alpha-D-ribose 1-diphosphate: step 7/9. The sequence is that of Histidinol-phosphate aminotransferase from Methanopyrus kandleri (strain AV19 / DSM 6324 / JCM 9639 / NBRC 100938).